The sequence spans 137 residues: Small ribosomal subunit protein uS8 (137 aa).

Belongs to the universal ribosomal protein uS8 family. As to quaternary structure, part of the 30S ribosomal subunit. Contacts proteins S5 and S12.

Its function is as follows. One of the primary rRNA binding proteins, it binds directly to 16S rRNA central domain where it helps coordinate assembly of the platform of the 30S subunit. The sequence is that of Small ribosomal subunit protein uS8 from Metamycoplasma arthritidis (strain 158L3-1) (Mycoplasma arthritidis).